The sequence spans 109 residues: MGKRPNFGGMGMGNMQGLIKQAKKMQQQMEAEQANLATQEFVGKAADDMVVATFSGDRKLKDLKINKEAIDPDDPDMLQDLVIDAVNKGIKAVDDATQASMGKYTKGLM.

It belongs to the YbaB/EbfC family. As to quaternary structure, homodimer.

The protein resides in the cytoplasm. It is found in the nucleoid. In terms of biological role, binds to DNA and alters its conformation. May be involved in regulation of gene expression, nucleoid organization and DNA protection. The sequence is that of Nucleoid-associated protein LJ_0424 from Lactobacillus johnsonii (strain CNCM I-12250 / La1 / NCC 533).